The following is a 193-amino-acid chain: Adenine phosphoribosyltransferase (193 aa).

It belongs to the purine/pyrimidine phosphoribosyltransferase family. As to quaternary structure, homodimer.

The protein localises to the cytoplasm. The catalysed reaction is AMP + diphosphate = 5-phospho-alpha-D-ribose 1-diphosphate + adenine. The protein operates within purine metabolism; AMP biosynthesis via salvage pathway; AMP from adenine: step 1/1. Catalyzes a salvage reaction resulting in the formation of AMP, that is energically less costly than de novo synthesis. This is Adenine phosphoribosyltransferase from Bifidobacterium longum (strain DJO10A).